Here is a 354-residue protein sequence, read N- to C-terminus: Guanine nucleotide-binding protein G(i) subunit alpha-1 (354 aa).

The N-myristoyl glycine moiety is linked to residue glycine 2. Cysteine 3 carries S-palmitoyl cysteine lipidation. The G-alpha domain maps to 32–354 (REVKLLLLGA…KNNLKDCGLF (323 aa)). Positions 35-48 (KLLLLGAGESGKST) are G1 motif. GTP contacts are provided by residues 43–48 (ESGKST), 150–151 (DS), and 175–178 (LRTR). Residue serine 47 coordinates Mg(2+). The G2 motif stretch occupies residues 173-181 (DVLRTRVKT). Threonine 181 contacts Mg(2+). The tract at residues 196–205 (FKMFDVGGQR) is G3 motif. GTP contacts are provided by residues 200 to 204 (DVGGQ), 269 to 272 (NKKD), and alanine 326. The tract at residues 265 to 272 (ILFLNKKD) is G4 motif. Residues 324-329 (TCATDT) form a G5 motif region.

The protein belongs to the G-alpha family. G(i/o/t/z) subfamily. Heterotrimeric G proteins are composed of 3 units; alpha, beta and gamma. The alpha chain contains the guanine nucleotide binding site. Part of a spindle orientation complex. Identified in complex with the beta subunit GNB1 and the gamma subunit GNG1. Identified in complex with the beta subunit GNB1 and the gamma subunit GNG2. GTP binding causes dissociation of the heterotrimer, liberating the individual subunits so that they can interact with downstream effector proteins. Myristoylation at Gly-2 is required for membrane anchoring before palmitoylation. In terms of processing, palmitoylation at Cys-3 varies with membrane lipid composition.

The protein localises to the nucleus. The protein resides in the cytoplasm. It localises to the cell membrane. It is found in the cytoskeleton. Its subcellular location is the microtubule organizing center. The protein localises to the centrosome. The protein resides in the cell cortex. It localises to the membrane. The enzyme catalyses GTP + H2O = GDP + phosphate + H(+). In terms of biological role, guanine nucleotide-binding proteins (G proteins) function as transducers downstream of G protein-coupled receptors (GPCRs) in numerous signaling cascades. The alpha chain contains the guanine nucleotide binding site and alternates between an active, GTP-bound state and an inactive, GDP-bound state. Signaling by an activated GPCR promotes GDP release and GTP binding. The alpha subunit has a low GTPase activity that converts bound GTP to GDP, thereby terminating the signal. Both GDP release and GTP hydrolysis are modulated by numerous regulatory proteins. Signaling is mediated via effector proteins, such as adenylate cyclase. Inhibits adenylate cyclase activity, leading to decreased intracellular cAMP levels. Required for cortical dynein-dynactin complex recruitment during metaphase. The protein is Guanine nucleotide-binding protein G(i) subunit alpha-1 (gnai1) of Xenopus laevis (African clawed frog).